We begin with the raw amino-acid sequence, 497 residues long: MSDGFKALKLYNTLTRRDEEFVPLDPANVRMYVCGPTVYDFAHIGNARPVIVFDVLFRLLRQLYGDDHVTYVRNITDVDDKINARALRDFGEDITAGRLTLNEAIRRVTERTAAQFHADVAALGCLAPTHEPRATEFVLPRTDGKADMASLIQTLIDRGHAYAAKGEILFDTASMPDYGQLSKRRLEDQQAGARVAVDPHKRNPSDFVLWKESSAEEPGWEGRFTFEGKPLVIRGRPGWHIECSAMSAAYLGEVFDIHGGGLDLIFPHHENEIAQSRCAHGTPVMANYWLHNGFVQVEGKKMAKSEGNFVTIHDLLATENFGGRKWPGEVLRLAILMTHYREPLDFSLRKLEEAEAVLDGWYRVVGDAKHQEGDSGAVRRALLDDLGTPAAITVLHDLRAQAARGSEAAKADLKANAVLLGLLTQSQDQWFSGKAADAAIDEAAVEERVAARLSLLRAKNFPEADRIREELSGRGIQLMDYKDPETGERRTKWEVKR.

A Zn(2+)-binding site is contributed by Cys34. The short motif at 36–46 is the 'HIGH' region element; that stretch reads PTVYDFAHIGN. The Zn(2+) site is built by Cys243, His268, and Glu272. The short motif at 301-305 is the 'KMSKS' region element; that stretch reads KMAKS. Residue Lys304 participates in ATP binding. Residues 478–497 form a disordered region; that stretch reads LMDYKDPETGERRTKWEVKR. Residues 480–497 are compositionally biased toward basic and acidic residues; sequence DYKDPETGERRTKWEVKR.

This sequence belongs to the class-I aminoacyl-tRNA synthetase family. In terms of assembly, monomer. It depends on Zn(2+) as a cofactor.

It is found in the cytoplasm. The enzyme catalyses tRNA(Cys) + L-cysteine + ATP = L-cysteinyl-tRNA(Cys) + AMP + diphosphate. In Chelativorans sp. (strain BNC1), this protein is Cysteine--tRNA ligase.